Reading from the N-terminus, the 321-residue chain is RNA/RNP complex-1-interacting phosphatase (321 aa).

Basic residues predominate over residues 1-11; that stretch reads MNQHYGRHGRG. Residues 1-27 are disordered; sequence MNQHYGRHGRGRGRDFAACAPPKKKGR. The 148-residue stretch at 60 to 207 folds into the Tyrosine-protein phosphatase domain; that stretch reads FEAKLMPEEC…LQKRHVRKNR (148 aa). Catalysis depends on Cys151, which acts as the Phosphocysteine intermediate. Position 152-157 (152-157) interacts with substrate; the sequence is THGLNR. The active-site Proton donor/acceptor is Arg157. The segment at 205–262 is disordered; it reads KNRNVSAPRTDGLEDSADPTEQVYTNNKPVKKKPRKNRRGGHLAPSQHFQHQTQSSPY. A compositionally biased stretch (basic residues) spans 233–245; sequence PVKKKPRKNRRGG. Residues 251–262 are compositionally biased toward polar residues; the sequence is QHFQHQTQSSPY.

This sequence belongs to the protein-tyrosine phosphatase family. Non-receptor class dual specificity subfamily. As to quaternary structure, monomer. May interact with SFRS7 and SFRS9/SRP30C.

The protein localises to the nucleus. The protein resides in the nucleus speckle. Possesses RNA 5'-triphosphatase and diphosphatase activities, but displays a poor protein-tyrosine phosphatase activity. In addition, has phosphatase activity with ATP, ADP and O-methylfluorescein phosphate (in vitro). Binds to RNA. May participate in nuclear mRNA metabolism. This Mus musculus (Mouse) protein is RNA/RNP complex-1-interacting phosphatase (Dusp11).